Consider the following 103-residue polypeptide: MQSQKIRIRLKAFDHRLIDASTQEIVDTAKRTGAQVRGPIPLPTRKERYTVLISPHVNKDARDQYEIRTHKRVLDIVEPTEKTVDALMKLDLAAGVEVQISLG.

This sequence belongs to the universal ribosomal protein uS10 family. Part of the 30S ribosomal subunit.

In terms of biological role, involved in the binding of tRNA to the ribosomes. This chain is Small ribosomal subunit protein uS10, found in Marinomonas sp. (strain MWYL1).